We begin with the raw amino-acid sequence, 324 residues long: Acetyl-coenzyme A carboxylase carboxyl transferase subunit alpha (324 aa).

The CoA carboxyltransferase C-terminal domain occupies 37–291 (ILEDKLENLE…NVVLQKTFEQ (255 aa)).

This sequence belongs to the AccA family. Acetyl-CoA carboxylase is a heterohexamer composed of biotin carboxyl carrier protein (AccB), biotin carboxylase (AccC) and two subunits each of ACCase subunit alpha (AccA) and ACCase subunit beta (AccD).

It is found in the cytoplasm. It carries out the reaction N(6)-carboxybiotinyl-L-lysyl-[protein] + acetyl-CoA = N(6)-biotinyl-L-lysyl-[protein] + malonyl-CoA. It functions in the pathway lipid metabolism; malonyl-CoA biosynthesis; malonyl-CoA from acetyl-CoA: step 1/1. Component of the acetyl coenzyme A carboxylase (ACC) complex. First, biotin carboxylase catalyzes the carboxylation of biotin on its carrier protein (BCCP) and then the CO(2) group is transferred by the carboxyltransferase to acetyl-CoA to form malonyl-CoA. In Bacillus cytotoxicus (strain DSM 22905 / CIP 110041 / 391-98 / NVH 391-98), this protein is Acetyl-coenzyme A carboxylase carboxyl transferase subunit alpha.